Reading from the N-terminus, the 457-residue chain is D-inositol 3-phosphate glycosyltransferase (457 aa).

Position 34 (His-34) interacts with 1D-myo-inositol 3-phosphate. UDP-N-acetyl-alpha-D-glucosamine is bound by residues 40–41 (QP) and Gly-48. 1D-myo-inositol 3-phosphate contacts are provided by residues 45-50 (DAGGMN), Lys-103, Tyr-136, Thr-160, and Arg-180. UDP-N-acetyl-alpha-D-glucosamine is bound by residues Arg-267, Lys-272, and Val-333. Positions 342, 343, and 345 each coordinate Mg(2+). The UDP-N-acetyl-alpha-D-glucosamine site is built by Glu-355 and Glu-363. Mg(2+) is bound at residue Thr-369.

It belongs to the glycosyltransferase group 1 family. MshA subfamily. As to quaternary structure, homodimer.

It catalyses the reaction 1D-myo-inositol 3-phosphate + UDP-N-acetyl-alpha-D-glucosamine = 1D-myo-inositol 2-acetamido-2-deoxy-alpha-D-glucopyranoside 3-phosphate + UDP + H(+). Functionally, catalyzes the transfer of a N-acetyl-glucosamine moiety to 1D-myo-inositol 3-phosphate to produce 1D-myo-inositol 2-acetamido-2-deoxy-glucopyranoside 3-phosphate in the mycothiol biosynthesis pathway. The sequence is that of D-inositol 3-phosphate glycosyltransferase from Streptomyces coelicolor (strain ATCC BAA-471 / A3(2) / M145).